The primary structure comprises 140 residues: MNSFAFLLVCIQACLVQSVFSQCTSRAAVAADRGIIGGYGLGAPYGLGCGYGLEAPYGWAGYADYGYGLDAYGGIGEGNVAVAGELPVAGTTAVAGQVPIMGAVKFGGDVCAAGSVSIAGKCDCGCGEVYGYGLGAPYLY.

The signal sequence occupies residues 1–21 (MNSFAFLLVCIQACLVQSVFS).

This sequence belongs to the chorion protein family.

This protein is one of many from the eggshell of the gypsy moth. The protein is Chorion class A protein Ld2/Ld41 of Lymantria dispar (Gypsy moth).